Here is a 145-residue protein sequence, read N- to C-terminus: Superoxide dismutase [Mn/Fe] (145 aa).

2 residues coordinate Fe(3+): His10 and His64. Mn(2+)-binding residues include His10 and His64.

Belongs to the iron/manganese superoxide dismutase family. Requires Mn(2+) as cofactor. Fe(3+) is required as a cofactor.

The catalysed reaction is 2 superoxide + 2 H(+) = H2O2 + O2. Functionally, destroys superoxide anion radicals which are normally produced within the cells and which are toxic to biological systems. Catalyzes the dismutation of superoxide anion radicals into O2 and H2O2 by successive reduction and oxidation of the transition metal ion at the active site. The chain is Superoxide dismutase [Mn/Fe] (sodA) from Streptococcus canis.